A 275-amino-acid polypeptide reads, in one-letter code: NH(3)-dependent NAD(+) synthetase (275 aa).

46-53 is an ATP binding site; the sequence is GISGGQDS. Asp52 contacts Mg(2+). Deamido-NAD(+) is bound at residue Arg141. Position 161 (Thr161) interacts with ATP. Glu166 is a Mg(2+) binding site. Residues Lys174 and Asp181 each contribute to the deamido-NAD(+) site. Residues Lys190 and Thr212 each contribute to the ATP site. Deamido-NAD(+) is bound at residue 261-262; that stretch reads HK.

It belongs to the NAD synthetase family. As to quaternary structure, homodimer.

It carries out the reaction deamido-NAD(+) + NH4(+) + ATP = AMP + diphosphate + NAD(+) + H(+). It participates in cofactor biosynthesis; NAD(+) biosynthesis; NAD(+) from deamido-NAD(+) (ammonia route): step 1/1. In terms of biological role, catalyzes the ATP-dependent amidation of deamido-NAD to form NAD. Uses ammonia as a nitrogen source. This is NH(3)-dependent NAD(+) synthetase from Limosilactobacillus reuteri (strain DSM 20016) (Lactobacillus reuteri).